A 326-amino-acid chain; its full sequence is Interleukin-1-binding protein (326 aa).

The N-terminal stretch at 1–18 is a signal peptide; sequence MSILPVIFLSIFFYSSFV. 3 Ig-like domains span residues 24 to 115, 122 to 212, and 221 to 322; these read PECI…LNLT, SNID…RIVK, and PSTM…KTVT. Residues C48 and C99 are joined by a disulfide bond. Residues N80, N103, and N113 are each glycosylated (N-linked (GlcNAc...) asparagine; by host). An intrachain disulfide couples C143 to C194. N206 and N237 each carry an N-linked (GlcNAc...) asparagine; by host glycan. A disulfide bond links C242 and C309.

The protein belongs to the interleukin-1 receptor family. In terms of assembly, interacts with mouse Il1b.

It is found in the secreted. May reduce the host inflammatory response by interacting with inteleukin-1 beta (Il1b) and thus decreasing the association between IL1B and its cellular receptor. The sequence is that of Interleukin-1-binding protein (OPG201) from Vaccinia virus (strain Ankara) (VACV).